The following is a 545-amino-acid chain: CTP synthase (545 aa).

The tract at residues 1–266 is amidoligase domain; that stretch reads MTTNYIFVTG…DDYICKRFSL (266 aa). A CTP-binding site is contributed by Ser14. Residue Ser14 participates in UTP binding. ATP is bound by residues 15–20 and Asp72; that span reads SLGKGI. Positions 72 and 140 each coordinate Mg(2+). Residues 147–149, 187–192, and Lys223 contribute to the CTP site; these read DIE and KTKPTQ. UTP-binding positions include 187-192 and Lys223; that span reads KTKPTQ. 239–241 contributes to the ATP binding site; the sequence is KDV. The region spanning 291 to 542 is the Glutamine amidotransferase type-1 domain; sequence TIGMVGKYIE…VKAASEYQKR (252 aa). Residue Gly352 coordinates L-glutamine. The Nucleophile; for glutamine hydrolysis role is filled by Cys379. L-glutamine is bound by residues 380–383, Glu403, and Arg470; that span reads LGMQ. Residues His515 and Glu517 contribute to the active site.

The protein belongs to the CTP synthase family. As to quaternary structure, homotetramer.

It carries out the reaction UTP + L-glutamine + ATP + H2O = CTP + L-glutamate + ADP + phosphate + 2 H(+). The catalysed reaction is L-glutamine + H2O = L-glutamate + NH4(+). It catalyses the reaction UTP + NH4(+) + ATP = CTP + ADP + phosphate + 2 H(+). It functions in the pathway pyrimidine metabolism; CTP biosynthesis via de novo pathway; CTP from UDP: step 2/2. With respect to regulation, allosterically activated by GTP, when glutamine is the substrate; GTP has no effect on the reaction when ammonia is the substrate. The allosteric effector GTP functions by stabilizing the protein conformation that binds the tetrahedral intermediate(s) formed during glutamine hydrolysis. Inhibited by the product CTP, via allosteric rather than competitive inhibition. Its function is as follows. Catalyzes the ATP-dependent amination of UTP to CTP with either L-glutamine or ammonia as the source of nitrogen. Regulates intracellular CTP levels through interactions with the four ribonucleotide triphosphates. The sequence is that of CTP synthase from Klebsiella pneumoniae subsp. pneumoniae (strain ATCC 700721 / MGH 78578).